We begin with the raw amino-acid sequence, 304 residues long: Small ribosomal subunit biogenesis GTPase RsgA (304 aa).

Residues 78-237 (HSFLTRPPVA…VADTPGFNRP (160 aa)) form the CP-type G domain. Residues 127–130 (TKTD) and 179–187 (GPSGVGKSS) each bind GTP. Zn(2+)-binding residues include cysteine 262, cysteine 267, histidine 269, and cysteine 275.

It belongs to the TRAFAC class YlqF/YawG GTPase family. RsgA subfamily. As to quaternary structure, monomer. Associates with 30S ribosomal subunit, binds 16S rRNA. Zn(2+) serves as cofactor.

It is found in the cytoplasm. In terms of biological role, one of several proteins that assist in the late maturation steps of the functional core of the 30S ribosomal subunit. Helps release RbfA from mature subunits. May play a role in the assembly of ribosomal proteins into the subunit. Circularly permuted GTPase that catalyzes slow GTP hydrolysis, GTPase activity is stimulated by the 30S ribosomal subunit. The chain is Small ribosomal subunit biogenesis GTPase RsgA from Synechococcus sp. (strain CC9605).